We begin with the raw amino-acid sequence, 64 residues long: Small ribosomal subunit protein eS17 (64 aa).

The protein belongs to the eukaryotic ribosomal protein eS17 family.

This is Small ribosomal subunit protein eS17 from Natronomonas pharaonis (strain ATCC 35678 / DSM 2160 / CIP 103997 / JCM 8858 / NBRC 14720 / NCIMB 2260 / Gabara) (Halobacterium pharaonis).